The following is a 544-amino-acid chain: Chaperonin GroEL (544 aa).

ATP is bound by residues 30 to 33 (TLGP), Lys51, 87 to 91 (DGTTT), Gly415, 481 to 483 (DAL), and Asp497.

Belongs to the chaperonin (HSP60) family. In terms of assembly, forms a cylinder of 14 subunits composed of two heptameric rings stacked back-to-back. Interacts with the co-chaperonin GroES.

Its subcellular location is the cytoplasm. It carries out the reaction ATP + H2O + a folded polypeptide = ADP + phosphate + an unfolded polypeptide.. Together with its co-chaperonin GroES, plays an essential role in assisting protein folding. The GroEL-GroES system forms a nano-cage that allows encapsulation of the non-native substrate proteins and provides a physical environment optimized to promote and accelerate protein folding. In Chlamydia trachomatis serovar D (strain ATCC VR-885 / DSM 19411 / UW-3/Cx), this protein is Chaperonin GroEL.